Here is a 346-residue protein sequence, read N- to C-terminus: Alkylated DNA repair protein ALKBH8 homolog (346 aa).

Residues 1-21 form a disordered region; it reads MVQPRFVRPTQSSPSSISGEP. Positions 12–21 are enriched in low complexity; sequence SSPSSISGEP. The RRM domain maps to 24–102; it reads SNLYVANCGP…RSLHIRYSVL (79 aa). The region spanning 208-328 is the Fe2OG dioxygenase domain; the sequence is NLDQLTVNEY…RVSFTLRKVR (121 aa). Fe cation contacts are provided by H226, D228, and H298. Positions 319 and 325 each coordinate 2-oxoglutarate.

It belongs to the alkB family. The cofactor is Fe(2+).

Functionally, binds tRNA and catalyzes the iron and alpha-ketoglutarate dependent hydroxylation of 5-methylcarboxymethyl uridine at the wobble position of the anticodon loop in tRNA via its dioxygenase domain, giving rise to 5-(S)-methoxycarbonylhydroxymethyluridine. The chain is Alkylated DNA repair protein ALKBH8 homolog from Arabidopsis thaliana (Mouse-ear cress).